A 188-amino-acid chain; its full sequence is MSRLRIFDDHTPNTPFFVSKEQAQITAELHKIGITFERWEATQAIEPGATAEQVMAAYRADIDRLIATHGFKTVDVISIAPDNAKREEMRAKFLEEHFHKEDEVRFFVAGSGLFTVHSGNKVYEIECVKNDLIAIPDGTLHWFDMGAAPYFVAIRFFTEPDGWVGHFTGTDIAQRFPRYIPEGCQSAH.

His-97, His-99, Glu-103, and His-141 together coordinate Fe(2+). The Ni(2+) site is built by His-97, His-99, Glu-103, and His-141.

This sequence belongs to the acireductone dioxygenase (ARD) family. Monomer. It depends on Fe(2+) as a cofactor. Requires Ni(2+) as cofactor.

The catalysed reaction is 1,2-dihydroxy-5-(methylsulfanyl)pent-1-en-3-one + O2 = 3-(methylsulfanyl)propanoate + CO + formate + 2 H(+). It catalyses the reaction 1,2-dihydroxy-5-(methylsulfanyl)pent-1-en-3-one + O2 = 4-methylsulfanyl-2-oxobutanoate + formate + 2 H(+). The protein operates within amino-acid biosynthesis; L-methionine biosynthesis via salvage pathway; L-methionine from S-methyl-5-thio-alpha-D-ribose 1-phosphate: step 5/6. In terms of biological role, catalyzes 2 different reactions between oxygen and the acireductone 1,2-dihydroxy-3-keto-5-methylthiopentene (DHK-MTPene) depending upon the metal bound in the active site. Fe-containing acireductone dioxygenase (Fe-ARD) produces formate and 2-keto-4-methylthiobutyrate (KMTB), the alpha-ketoacid precursor of methionine in the methionine recycle pathway. Ni-containing acireductone dioxygenase (Ni-ARD) produces methylthiopropionate, carbon monoxide and formate, and does not lie on the methionine recycle pathway. This is Acireductone dioxygenase from Xylella fastidiosa (strain M12).